The sequence spans 273 residues: Dermonecrotic toxin LhSicTox-alphaIA2bvi (273 aa).

Histidine 5 is an active-site residue. Mg(2+)-binding residues include glutamate 25 and aspartate 27. Histidine 41 (nucleophile) is an active-site residue. Intrachain disulfides connect cysteine 45-cysteine 51 and cysteine 47-cysteine 190. Residue aspartate 85 participates in Mg(2+) binding.

Belongs to the arthropod phospholipase D family. Class II subfamily. The cofactor is Mg(2+). As to expression, expressed by the venom gland.

The protein resides in the secreted. It catalyses the reaction an N-(acyl)-sphingosylphosphocholine = an N-(acyl)-sphingosyl-1,3-cyclic phosphate + choline. The enzyme catalyses an N-(acyl)-sphingosylphosphoethanolamine = an N-(acyl)-sphingosyl-1,3-cyclic phosphate + ethanolamine. The catalysed reaction is a 1-acyl-sn-glycero-3-phosphocholine = a 1-acyl-sn-glycero-2,3-cyclic phosphate + choline. It carries out the reaction a 1-acyl-sn-glycero-3-phosphoethanolamine = a 1-acyl-sn-glycero-2,3-cyclic phosphate + ethanolamine. Its function is as follows. Dermonecrotic toxins cleave the phosphodiester linkage between the phosphate and headgroup of certain phospholipids (sphingolipid and lysolipid substrates), forming an alcohol (often choline) and a cyclic phosphate. This toxin acts on sphingomyelin (SM). It may also act on ceramide phosphoethanolamine (CPE), lysophosphatidylcholine (LPC) and lysophosphatidylethanolamine (LPE), but not on lysophosphatidylserine (LPS), and lysophosphatidylglycerol (LPG). It acts by transphosphatidylation, releasing exclusively cyclic phosphate products as second products. Induces dermonecrosis, hemolysis, increased vascular permeability, edema, inflammatory response, and platelet aggregation. The chain is Dermonecrotic toxin LhSicTox-alphaIA2bvi from Loxosceles hirsuta (Recluse spider).